Reading from the N-terminus, the 288-residue chain is T-cell-interacting, activating receptor on myeloid cells protein 1 (288 aa).

An N-terminal signal peptide occupies residues 1–16 (MISRLLSLLCLRLCVG). Over 17 to 258 (QTDIPENGSP…EGYTVDNLIR (242 aa)) the chain is Extracellular. Ig-like C2-type domains follow at residues 27 to 113 (PKPS…HPSN) and 124 to 217 (PQPS…LEIS). 2 disulfide bridges follow: Cys-49-Cys-97 and Cys-146-Cys-196. 2 N-linked (GlcNAc...) asparagine glycosylation sites follow: Asn-74 and Asn-185. A helical membrane pass occupies residues 259 to 279 (VGVAAAILLIVGGFLVEAWHS). The Cytoplasmic portion of the chain corresponds to 280–288 (ERLSPNKPW).

In terms of assembly, interacts with Fc receptor gamma chain FCER1G. In terms of processing, N-glycosylated. As to expression, expressed in lung, uterus, lymph nodes, spleen, thymus and bone marrow. Expressed in bone marrow CD11b(+)Gr-1(+) granulocyte precursors and mature neutrophils.

It localises to the cell membrane. In terms of biological role, may act as receptor. Negatively regulates TCR-mediated CD4(+) T cell proliferation and activation, possibly by binding an unknown ligand on the T cell surface. Enhances Toll-like receptor-mediated production of pro-inflammatory cytokines by macrophages and neutrophils. The sequence is that of T-cell-interacting, activating receptor on myeloid cells protein 1 (Tarm1) from Mus musculus (Mouse).